Consider the following 491-residue polypeptide: Ketol-acid reductoisomerase (NADP(+)) (491 aa).

The KARI N-terminal Rossmann domain occupies 15 to 208; sequence AQLGKCRFMG…GGHRAGVLES (194 aa). NADP(+) contacts are provided by residues 45-48, arginine 68, arginine 76, serine 78, and 108-110; these read CGAQ and DKQ. Residue histidine 132 is part of the active site. Residue glycine 158 participates in NADP(+) binding. 2 consecutive KARI C-terminal knotted domains span residues 209–344 and 345–484; these read SFVA…TAPQ and FEGK…MTDM. Mg(2+)-binding residues include aspartate 217, glutamate 221, glutamate 389, and glutamate 393. Residue serine 414 participates in substrate binding.

It belongs to the ketol-acid reductoisomerase family. It depends on Mg(2+) as a cofactor.

It carries out the reaction (2R)-2,3-dihydroxy-3-methylbutanoate + NADP(+) = (2S)-2-acetolactate + NADPH + H(+). The enzyme catalyses (2R,3R)-2,3-dihydroxy-3-methylpentanoate + NADP(+) = (S)-2-ethyl-2-hydroxy-3-oxobutanoate + NADPH + H(+). It participates in amino-acid biosynthesis; L-isoleucine biosynthesis; L-isoleucine from 2-oxobutanoate: step 2/4. It functions in the pathway amino-acid biosynthesis; L-valine biosynthesis; L-valine from pyruvate: step 2/4. In terms of biological role, involved in the biosynthesis of branched-chain amino acids (BCAA). Catalyzes an alkyl-migration followed by a ketol-acid reduction of (S)-2-acetolactate (S2AL) to yield (R)-2,3-dihydroxy-isovalerate. In the isomerase reaction, S2AL is rearranged via a Mg-dependent methyl migration to produce 3-hydroxy-3-methyl-2-ketobutyrate (HMKB). In the reductase reaction, this 2-ketoacid undergoes a metal-dependent reduction by NADPH to yield (R)-2,3-dihydroxy-isovalerate. The chain is Ketol-acid reductoisomerase (NADP(+)) from Salmonella choleraesuis (strain SC-B67).